We begin with the raw amino-acid sequence, 241 residues long: 2,3-bisphosphoglycerate-dependent phosphoglycerate mutase (241 aa).

His12 functions as the Tele-phosphohistidine intermediate in the catalytic mechanism. Residues 24 to 25, Arg61, 117 to 120, and Lys128 contribute to the substrate site; these read SG and ERYY. The Proton donor/acceptor role is filled by Glu117.

Belongs to the phosphoglycerate mutase family. BPG-dependent PGAM subfamily.

The catalysed reaction is (2R)-2-phosphoglycerate = (2R)-3-phosphoglycerate. It functions in the pathway carbohydrate degradation; glycolysis; pyruvate from D-glyceraldehyde 3-phosphate: step 3/5. Functionally, catalyzes the interconversion of 2-phosphoglycerate and 3-phosphoglycerate. The polypeptide is 2,3-bisphosphoglycerate-dependent phosphoglycerate mutase (Methanosarcina mazei (strain ATCC BAA-159 / DSM 3647 / Goe1 / Go1 / JCM 11833 / OCM 88) (Methanosarcina frisia)).